A 141-amino-acid polypeptide reads, in one-letter code: Ribosomal RNA large subunit methyltransferase H (141 aa).

S-adenosyl-L-methionine is bound at residue Gly-88.

This sequence belongs to the RNA methyltransferase RlmH family. As to quaternary structure, homodimer.

The protein resides in the cytoplasm. The catalysed reaction is pseudouridine(1915) in 23S rRNA + S-adenosyl-L-methionine = N(3)-methylpseudouridine(1915) in 23S rRNA + S-adenosyl-L-homocysteine + H(+). Specifically methylates the pseudouridine at position 1915 (m3Psi1915) in 23S rRNA. In Novosphingobium aromaticivorans (strain ATCC 700278 / DSM 12444 / CCUG 56034 / CIP 105152 / NBRC 16084 / F199), this protein is Ribosomal RNA large subunit methyltransferase H.